Here is a 491-residue protein sequence, read N- to C-terminus: Argininosuccinate lyase (491 aa).

The protein belongs to the lyase 1 family. Argininosuccinate lyase subfamily.

Its subcellular location is the cytoplasm. It carries out the reaction 2-(N(omega)-L-arginino)succinate = fumarate + L-arginine. It functions in the pathway amino-acid biosynthesis; L-arginine biosynthesis; L-arginine from L-ornithine and carbamoyl phosphate: step 3/3. The polypeptide is Argininosuccinate lyase (Methanococcoides burtonii (strain DSM 6242 / NBRC 107633 / OCM 468 / ACE-M)).